The primary structure comprises 1247 residues: MDSPIFSNDIDSIKNNTYQAKSYQKYNNSNNYNNNNNNSFNNYSNGSNYGGYNNSGNNSNYNNNNNLYNNNNINNNNNNNNNNNINNNNNNINNNNNINNNNSNNNNNNNNNNSNSNNSINSNSYKVNTPTQNGKSSHSPPLINANANVVFPTFKSLDLSSDTVNSVGAANNGSSNSSPTINGISNSNTMNNNNNNNNNNNNNSNSSNNNNNGNNNNNNNYNSFVNITKNNNNTNSNNYNNSTNSNNNGYNNNNNNNSISNSNSNSNSNSNSNSNSNSNSNSNSNSNSNSNSNSSSNSSSSSNNNNNNNNNNNNNNNSSSSSSNSNGNNNNNYHSYGYSNSKYNQQKSYNNAPHQLNSGGGQNSYYNKNNYNNGNGNIGNGNNSGSGNSSNSNGWSGGYQKQNGANRYQSQSQQQPQQQQQQQPQQPQQPQQQQQQQQQQQQQQQQQQQQQQQQQQQQQQQQQQQQQQQQQQQQPPQQQQQQQQDIGDSSRMNGGSRVPKAPGSDIGFNRGLNNSLNGQTDLNNSNYNSNSNNNNTNNNNTNNNLVNGKLQHYNYNNSSFKFNKNAQYNNGNNNGNNNNNNNNNNNNNNNNNNNSNNNSTNNNNINNSGNNNISNSVSSNSNGNVGSNPHRFQKNHFEKPFNSNSSTPSTPPNSTPSSSTTTSPSSSFNTYSNTFNNGSSNSFNNGSFNNSFNNGSSSNGSFNHGSFNNGSSISSFSGSFNNGSSGSGFNASFNGGSNSNSFNNGDNNNNNNNNNNNNHHNNDIDDSEPIIDQLDSTGEEEMDNLIGKLDLFSTKSESLFHTWKLNYSNRNNNNNNNSNNNNNNNNSSNNNSNSNNNNDNNNNDSFDGSNSDSQNIETDRTTTKVYITGKNFNNHNNNNNNNNNNNNHHYNNNNNNNNNNNNNNNNNNNNNNNNNNNNNNNNNNENNNGDVFSNGFSTWTPKSGSNSLNNSQNNLSNGQNSSNNSQNNLNNSQNSLNSSGNHHSNYHGHNNHHHYNNNNNNNNNNNNNNNNNNNNNNNGNGYVKSYYNNKYQQKSPQHQSSNSVVLIPPPGFSTIAPPPGFSTNNNNNNNNNNNNNNNKNNNSNNNNIIEVGKANYQTSTLNNSQDDSYQQEQEQQEQESQQQQQQQQQQQQQQQQQQQQQQQQQNYSSTPPNITPHLKGDGGLEKWFGNNIYSFGASQSLNNENTNPSYSYVPYNNNNNNNNNFNNINNDNNDNDIINNNHQQTNPSLQNDTPPIKMLSLEEIERW.

8 disordered regions span residues 25–141 (KYNN…HSPP), 169–431 (AANN…QQPQ), 472–667 (QQQP…PSSS), 738–770 (NSNS…SEPI), 807–857 (YSNR…QNIE), 869–1087 (GKNF…NNNN), 1099–1122 (STLN…ESQQ), and 1139–1162 (QQQQ…KGDG). Residues 26–125 (YNNSNNYNNN…SNNSINSNSY (100 aa)) show a composition bias toward low complexity. Residues 126 to 139 (KVNTPTQNGKSSHS) show a composition bias toward polar residues. Low complexity-rich tracts occupy residues 169–178 (AANNGSSNSS), 185–223 (SNSN…NYNS), and 230–341 (NNNN…YSNS). Residues 342 to 356 (KYNQQKSYNNAPHQL) show a composition bias toward polar residues. Low complexity-rich tracts occupy residues 363 to 375 (NSYY…NNGN), 385 to 394 (GSGNSSNSNG), 409 to 431 (QSQS…QQPQ), and 472 to 484 (QQQP…QQQQ). Residues 511–522 (GLNNSLNGQTDL) show a composition bias toward polar residues. Low complexity-rich tracts occupy residues 523–544 (NNSN…TNNN), 553–628 (YNYN…VGSN), 655–667 (TPSS…PSSS), 738–759 (NSNS…NNNH), 807–855 (YSNR…DSQN), and 871–928 (NFNN…ENNN). Over residues 929 to 942 (GDVFSNGFSTWTPK) the composition is skewed to polar residues. The segment covering 943 to 983 (SGSNSLNNSQNNLSNGQNSSNNSQNNLNNSQNSLNSSGNHH) has biased composition (low complexity). Positions 984-995 (SNYHGHNNHHHY) are enriched in basic residues. Residues 996 to 1021 (NNNNNNNNNNNNNNNNNNNNNNNGNG) are compositionally biased toward low complexity. Residues 1026 to 1044 (YYNNKYQQKSPQHQSSNSV) show a composition bias toward polar residues. Pro residues predominate over residues 1047–1060 (IPPPGFSTIAPPPG). The segment covering 1064-1087 (NNNNNNNNNNNNNNNKNNNSNNNN) has biased composition (low complexity). Positions 1099–1108 (STLNNSQDDS) are enriched in polar residues. Over residues 1110–1122 (QQEQEQQEQESQQ) the composition is skewed to low complexity.

This is an uncharacterized protein from Dictyostelium discoideum (Social amoeba).